A 307-amino-acid chain; its full sequence is Melanoma-associated antigen F1 (307 aa).

The tract at residues Met1–Thr55 is disordered. 2 stretches are compositionally biased toward basic and acidic residues: residues Glu16–Thr27 and Glu35–Gly48. One can recognise an MAGE domain in the interval Leu76–Leu277.

As to quaternary structure, interacts (via MAGE domain) with RING-type zinc finger-containing E3 ubiquitin-protein ligases LNX1, TRIM27 and NSMCE1; the interaction is direct. Ubiquitous.

In terms of biological role, enhances ubiquitin ligase activity of RING-type zinc finger-containing E3 ubiquitin ligases. Proposed to act through recruitment and/or stabilization of the E2 ubiquitin-conjugating enzyme at the E3:substrate complex. MAGEF1-NSMCE1 ubiquitin ligase complex promotes proteasomal degradation of MMS19, a key component of the cytosolic iron-sulfur protein assembly (CIA) machinery. Down-regulation of MMS19 impairs the activity of several DNA repair and metabolism enzymes such as ERCC2/XPD, FANCJ, RTEL1 and POLD1 that require iron-sulfur clusters as cofactors. May negatively regulate genome integrity by inhibiting homologous recombination-mediated double-strand break DNA repair. The protein is Melanoma-associated antigen F1 of Homo sapiens (Human).